A 122-amino-acid chain; its full sequence is Large ribosomal subunit protein uL14 (122 aa).

The protein belongs to the universal ribosomal protein uL14 family. As to quaternary structure, part of the 50S ribosomal subunit. Forms a cluster with proteins L3 and L19. In the 70S ribosome, L14 and L19 interact and together make contacts with the 16S rRNA in bridges B5 and B8.

Binds to 23S rRNA. Forms part of two intersubunit bridges in the 70S ribosome. The sequence is that of Large ribosomal subunit protein uL14 from Chloroherpeton thalassium (strain ATCC 35110 / GB-78).